The chain runs to 188 residues: dCTP deaminase (188 aa).

DCTP is bound by residues 111 to 116, 135 to 137, Gln-156, Tyr-170, Lys-179, and Gln-180; these read KSTYAR and TLE. Glu-137 acts as the Proton donor/acceptor in catalysis.

The protein belongs to the dCTP deaminase family. Homotrimer.

It carries out the reaction dCTP + H2O + H(+) = dUTP + NH4(+). Its pathway is pyrimidine metabolism; dUMP biosynthesis; dUMP from dCTP (dUTP route): step 1/2. Functionally, catalyzes the deamination of dCTP to dUTP. This Rickettsia felis (strain ATCC VR-1525 / URRWXCal2) (Rickettsia azadi) protein is dCTP deaminase.